The sequence spans 245 residues: Exosome complex component RRP41 (245 aa).

Ala2 bears the N-acetylalanine mark.

Belongs to the RNase PH family. Component of the RNA exosome core complex (Exo-9), composed of EXOSC1, EXOSC2, EXOSC3, EXOSC4, EXOSC5, EXOSC6, EXOSC7, EXOSC8 and EXOSC9; within the complex interacts with EXOSC2, EXOSC7 and EXOSC9. The catalytically inactive RNA exosome core complex (Exo-9) associates with the catalytic subunit EXOSC10/RRP6. Exo-9 may associate with DIS3 to form the nucleolar exosome complex, or DIS3L to form the cytoplasmic exosome complex. Exo-9 is formed by a hexameric base ring consisting of the heterodimers EXOSC4-EXOSC9, EXOSC5-EXOSC8 and EXOSC6-EXOSC7, and a cap ring consisting of EXOSC1, EXOSC2 and EXOSC3. The RNA exosome complex associates with cofactors C1D/RRP47, MPHOSPH6/MPP6 and MTREX/MTR4. Interacts with DDX60. Interacts with DIS3; the interaction is direct.

The protein resides in the cytoplasm. The protein localises to the nucleus. It localises to the nucleolus. Its subcellular location is the nucleoplasm. In terms of biological role, non-catalytic component of the RNA exosome complex which has 3'-&gt;5' exoribonuclease activity and participates in a multitude of cellular RNA processing and degradation events. In the nucleus, the RNA exosome complex is involved in proper maturation of stable RNA species such as rRNA, snRNA and snoRNA, in the elimination of RNA processing by-products and non-coding 'pervasive' transcripts, such as antisense RNA species and promoter-upstream transcripts (PROMPTs), and of mRNAs with processing defects, thereby limiting or excluding their export to the cytoplasm. The RNA exosome may be involved in Ig class switch recombination (CSR) and/or Ig variable region somatic hypermutation (SHM) by targeting AICDA deamination activity to transcribed dsDNA substrates. In the cytoplasm, the RNA exosome complex is involved in general mRNA turnover and specifically degrades inherently unstable mRNAs containing AU-rich elements (AREs) within their 3' untranslated regions, and in RNA surveillance pathways, preventing translation of aberrant mRNAs. It seems to be involved in degradation of histone mRNA. The catalytic inactive RNA exosome core complex of 9 subunits (Exo-9) is proposed to play a pivotal role in the binding and presentation of RNA for ribonucleolysis, and to serve as a scaffold for the association with catalytic subunits and accessory proteins or complexes. EXOSC4 binds to ARE-containing RNAs. The protein is Exosome complex component RRP41 (EXOSC4) of Homo sapiens (Human).